The sequence spans 955 residues: Leucine--tRNA ligase (955 aa).

The short motif at 51–61 (PYLNGVLHAGH) is the 'HIGH' region element. The 'KMSKS' region motif lies at 647-651 (KLSKS). Residue K650 participates in ATP binding.

It belongs to the class-I aminoacyl-tRNA synthetase family.

It localises to the cytoplasm. It catalyses the reaction tRNA(Leu) + L-leucine + ATP = L-leucyl-tRNA(Leu) + AMP + diphosphate. This is Leucine--tRNA ligase from Methanococcus maripaludis (strain C7 / ATCC BAA-1331).